The primary structure comprises 145 residues: Deoxyuridine 5'-triphosphate nucleotidohydrolase (145 aa).

Substrate is bound by residues 62-64 (RSG), asparagine 75, and 79-81 (TVD).

Belongs to the dUTPase family. The cofactor is Mg(2+).

The catalysed reaction is dUTP + H2O = dUMP + diphosphate + H(+). It participates in pyrimidine metabolism; dUMP biosynthesis; dUMP from dCTP (dUTP route): step 2/2. This enzyme is involved in nucleotide metabolism: it produces dUMP, the immediate precursor of thymidine nucleotides and it decreases the intracellular concentration of dUTP so that uracil cannot be incorporated into DNA. This chain is Deoxyuridine 5'-triphosphate nucleotidohydrolase, found in Gloeothece citriformis (strain PCC 7424) (Cyanothece sp. (strain PCC 7424)).